Reading from the N-terminus, the 352-residue chain is Ferrochelatase (352 aa).

Positions 222 and 303 each coordinate Fe cation.

Belongs to the ferrochelatase family.

It localises to the cytoplasm. The catalysed reaction is heme b + 2 H(+) = protoporphyrin IX + Fe(2+). Its pathway is porphyrin-containing compound metabolism; protoheme biosynthesis; protoheme from protoporphyrin-IX: step 1/1. Its function is as follows. Catalyzes the ferrous insertion into protoporphyrin IX. The chain is Ferrochelatase from Brucella melitensis biotype 2 (strain ATCC 23457).